The following is a 150-amino-acid chain: UPF0756 membrane protein Asuc_1151 (150 aa).

Helical transmembrane passes span 1–21, 52–72, 82–102, and 123–143; these read MSLH…LGVL, YGLN…IVAG, LLHW…WLAG, and ILGV…AGIL.

This sequence belongs to the UPF0756 family.

The protein localises to the cell membrane. The chain is UPF0756 membrane protein Asuc_1151 from Actinobacillus succinogenes (strain ATCC 55618 / DSM 22257 / CCUG 43843 / 130Z).